A 508-amino-acid polypeptide reads, in one-letter code: Photosystem II CP47 reaction center protein (508 aa).

6 consecutive transmembrane segments (helical) span residues 21–36 (AVHI…WAGS), 101–115 (IVFS…IWHW), 140–156 (GIHL…FGAF), 203–218 (IAAG…FHLS), 237–252 (VLSS…AFVV), and 457–472 (SFAL…HGSR).

This sequence belongs to the PsbB/PsbC family. PsbB subfamily. In terms of assembly, PSII is composed of 1 copy each of membrane proteins PsbA, PsbB, PsbC, PsbD, PsbE, PsbF, PsbH, PsbI, PsbJ, PsbK, PsbL, PsbM, PsbT, PsbX, PsbY, PsbZ, Psb30/Ycf12, at least 3 peripheral proteins of the oxygen-evolving complex and a large number of cofactors. It forms dimeric complexes. Binds multiple chlorophylls. PSII binds additional chlorophylls, carotenoids and specific lipids. serves as cofactor.

It is found in the plastid. The protein localises to the chloroplast thylakoid membrane. One of the components of the core complex of photosystem II (PSII). It binds chlorophyll and helps catalyze the primary light-induced photochemical processes of PSII. PSII is a light-driven water:plastoquinone oxidoreductase, using light energy to abstract electrons from H(2)O, generating O(2) and a proton gradient subsequently used for ATP formation. This chain is Photosystem II CP47 reaction center protein, found in Populus trichocarpa (Western balsam poplar).